Consider the following 525-residue polypeptide: GMP synthase [glutamine-hydrolyzing] (525 aa).

The region spanning 9–207 (RILILDFGSQ…VLDVCQCEAL (199 aa)) is the Glutamine amidotransferase type-1 domain. Cysteine 86 acts as the Nucleophile in catalysis. Catalysis depends on residues histidine 181 and glutamate 183. The GMPS ATP-PPase domain maps to 208–400 (WTPASIIEDT…LGLPYDMLNR (193 aa)). 235–241 (SGGVDSS) serves as a coordination point for ATP.

Homodimer.

It catalyses the reaction XMP + L-glutamine + ATP + H2O = GMP + L-glutamate + AMP + diphosphate + 2 H(+). Its pathway is purine metabolism; GMP biosynthesis; GMP from XMP (L-Gln route): step 1/1. Catalyzes the synthesis of GMP from XMP. The sequence is that of GMP synthase [glutamine-hydrolyzing] from Photorhabdus laumondii subsp. laumondii (strain DSM 15139 / CIP 105565 / TT01) (Photorhabdus luminescens subsp. laumondii).